A 297-amino-acid polypeptide reads, in one-letter code: Transmembrane protein 169 (297 aa).

The tract at residues M1–D85 is disordered. Residues M1 to H159 are Extracellular-facing. A compositionally biased stretch (acidic residues) spans K61 to D85. The chain crosses the membrane as a helical span at residues V160–F180. Over Y181–L210 the chain is Cytoplasmic. The chain crosses the membrane as a helical span at residues V211–V231. The Extracellular segment spans residues V232–V297.

It is found in the membrane. The chain is Transmembrane protein 169 (TMEM169) from Homo sapiens (Human).